The chain runs to 488 residues: Glutamate--tRNA ligase (488 aa).

Positions 9 to 19 match the 'HIGH' region motif; it reads PSPTGFLHIGG. Residues Cys112, Cys114, Cys139, and His141 each coordinate Zn(2+). The short motif at 256–260 is the 'KMSKS' region element; the sequence is KLSKR. Residue Lys259 coordinates ATP.

This sequence belongs to the class-I aminoacyl-tRNA synthetase family. Glutamate--tRNA ligase type 1 subfamily. As to quaternary structure, monomer. It depends on Zn(2+) as a cofactor.

It localises to the cytoplasm. The enzyme catalyses tRNA(Glu) + L-glutamate + ATP = L-glutamyl-tRNA(Glu) + AMP + diphosphate. Functionally, catalyzes the attachment of glutamate to tRNA(Glu) in a two-step reaction: glutamate is first activated by ATP to form Glu-AMP and then transferred to the acceptor end of tRNA(Glu). The protein is Glutamate--tRNA ligase of Elusimicrobium minutum (strain Pei191).